We begin with the raw amino-acid sequence, 494 residues long: UPF0371 protein STER_1332 (494 aa).

Belongs to the UPF0371 family.

This is UPF0371 protein STER_1332 from Streptococcus thermophilus (strain ATCC BAA-491 / LMD-9).